The primary structure comprises 255 residues: Adenosylcobinamide-GDP ribazoletransferase (255 aa).

6 helical membrane passes run 24 to 44 (LIAY…SLYV), 45 to 65 (AIYG…IYIV), 98 to 118 (VGAG…ISLS), 122 to 142 (LYIG…MMMI), 164 to 184 (KHDS…ALLS), and 187 to 207 (SIMI…MAVI).

It belongs to the CobS family. Requires Mg(2+) as cofactor.

Its subcellular location is the cell membrane. It carries out the reaction alpha-ribazole + adenosylcob(III)inamide-GDP = adenosylcob(III)alamin + GMP + H(+). The enzyme catalyses alpha-ribazole 5'-phosphate + adenosylcob(III)inamide-GDP = adenosylcob(III)alamin 5'-phosphate + GMP + H(+). It participates in cofactor biosynthesis; adenosylcobalamin biosynthesis; adenosylcobalamin from cob(II)yrinate a,c-diamide: step 7/7. In terms of biological role, joins adenosylcobinamide-GDP and alpha-ribazole to generate adenosylcobalamin (Ado-cobalamin). Also synthesizes adenosylcobalamin 5'-phosphate from adenosylcobinamide-GDP and alpha-ribazole 5'-phosphate. The polypeptide is Adenosylcobinamide-GDP ribazoletransferase (Thermoplasma acidophilum (strain ATCC 25905 / DSM 1728 / JCM 9062 / NBRC 15155 / AMRC-C165)).